The sequence spans 205 residues: Small ribosomal subunit protein uS4 (205 aa).

The tract at residues 19 to 45 (IWGRPKSPVNRREYGPGQHGQRRKGKL) is disordered. The region spanning 94 to 157 (SRLDAVVYRA…KQLAIVLEAV (64 aa)) is the S4 RNA-binding domain.

This sequence belongs to the universal ribosomal protein uS4 family. In terms of assembly, part of the 30S ribosomal subunit. Contacts protein S5. The interaction surface between S4 and S5 is involved in control of translational fidelity.

In terms of biological role, one of the primary rRNA binding proteins, it binds directly to 16S rRNA where it nucleates assembly of the body of the 30S subunit. Functionally, with S5 and S12 plays an important role in translational accuracy. This chain is Small ribosomal subunit protein uS4, found in Brucella melitensis biotype 2 (strain ATCC 23457).